The chain runs to 161 residues: CASP-like protein 1C2 (161 aa).

The Cytoplasmic segment spans residues 1–7 (MAKNTDR). A helical transmembrane segment spans residues 8–28 (ICFLVLRLLAFGATLSAAIVM). Residues 29–53 (ATSHERTTYLSLSIEAKYSHTPAFK) lie on the Extracellular side of the membrane. The helical transmembrane segment at 54 to 74 (YFVIANAIGSAYSLLLLFLPS) threads the bilayer. Residues 75–86 (HGSLWPLVIASD) are Cytoplasmic-facing. A helical transmembrane segment spans residues 87-107 (VVITMFLTSSISAALSIAYVG). Over 108 to 131 (KKGNSYAGWLPICDQVPNYCNHVT) the chain is Extracellular. Residues 132-152 (GALAAGFIGVVLYMVLLQYSI) form a helical membrane-spanning segment. Residues 153-161 (YTKCCKSSS) are Cytoplasmic-facing.

The protein belongs to the Casparian strip membrane proteins (CASP) family. As to quaternary structure, homodimer and heterodimers.

It localises to the cell membrane. The polypeptide is CASP-like protein 1C2 (Vitis vinifera (Grape)).